The chain runs to 178 residues: Platelet inhibitor triplatin-2 (178 aa).

The N-terminal stretch at 1–18 (MKMIISLTFLGILMLAFA) is a signal peptide. Intrachain disulfides connect Cys25–Cys134, Cys60–Cys178, and Cys90–Cys106.

The protein belongs to the calycin superfamily. Triabin family. In terms of tissue distribution, expressed in salivary glands.

The protein resides in the secreted. Inhibits platelet aggregation and vasoconstriction through binding to distinct eicosanoids involved in inflammation (acts as a scavenger), and has a role in inhibiting host innate immunity by impairing platelet-assisted formation of neutrophil extracellular traps (NETs). Inhibits platelet aggregation by collagen, and low doses of thromboxane A2 mimetic (TXA2 mimetic), and arachidonic acid (AA) without affecting aggregation induced by ADP, convulxin (GP6 agonist), and PMA. Binds to TXA2, TXB2, prostaglandine H2 mimetic (PGH2 mimetic), PGJ2, and PGF2alpha. Binding is not observed to leukotrienes, AA, and biogenic amines (PGE1, 5(S)-HETE, 12(S)-HETE, 20-HETE, norepinephrine, epinephrine, serotonin, LTC4 and ADP). Induces relaxation of aorta rat previously contracted with TXA2 mimetic. Moreover, it also impairs platelet-assisted formation of neutrophil extracellular traps (NETs). NETs are web-like structures of DNA and proteins that play an important role in killing of pathogens. In addition, NETs are implicated in thrombus formation. In vivo, this protein exhibits antithrombotic activity in two distinct mice models that are highly dependent on platelets. It is noteworthy that it inhibits thrombosis without promoting excessive bleeding. In Triatoma infestans (Assassin bug), this protein is Platelet inhibitor triplatin-2.